Here is a 190-residue protein sequence, read N- to C-terminus: dCTP deaminase, dUMP-forming (190 aa).

DCTP-binding positions include 101 to 106, aspartate 119, 127 to 129, glutamine 148, tyrosine 162, and glutamine 174; these read KSSLGR and TLE. Glutamate 129 functions as the Proton donor/acceptor in the catalytic mechanism. The disordered stretch occupies residues 161 to 190; that stretch reads PYGSSGVGSKYQGQRGPTPSRSYQNFIRST. The span at 171–190 shows a compositional bias: polar residues; it reads YQGQRGPTPSRSYQNFIRST.

It belongs to the dCTP deaminase family. In terms of assembly, homotrimer.

It carries out the reaction dCTP + 2 H2O = dUMP + NH4(+) + diphosphate. It functions in the pathway pyrimidine metabolism; dUMP biosynthesis; dUMP from dCTP: step 1/1. Functionally, bifunctional enzyme that catalyzes both the deamination of dCTP to dUTP and the hydrolysis of dUTP to dUMP without releasing the toxic dUTP intermediate. This chain is dCTP deaminase, dUMP-forming, found in Mycobacterium marinum (strain ATCC BAA-535 / M).